The following is a 325-amino-acid chain: Probable cell division protein WhiA (325 aa).

The H-T-H motif DNA-binding region spans 273-306 (SLEELGALADPPLTKDAVAGRIRRLLALADKRAN).

This sequence belongs to the WhiA family.

Involved in cell division and chromosome segregation. The protein is Probable cell division protein WhiA of Frankia casuarinae (strain DSM 45818 / CECT 9043 / HFP020203 / CcI3).